The following is a 450-amino-acid chain: Phosphoglucosamine mutase (450 aa).

The active-site Phosphoserine intermediate is Ser104. Mg(2+)-binding residues include Ser104, Asp243, Asp245, and Asp247. Ser104 bears the Phosphoserine mark.

The protein belongs to the phosphohexose mutase family. It depends on Mg(2+) as a cofactor. In terms of processing, activated by phosphorylation.

The catalysed reaction is alpha-D-glucosamine 1-phosphate = D-glucosamine 6-phosphate. Catalyzes the conversion of glucosamine-6-phosphate to glucosamine-1-phosphate. In Cutibacterium acnes (strain DSM 16379 / KPA171202) (Propionibacterium acnes), this protein is Phosphoglucosamine mutase.